The chain runs to 369 residues: Peptide chain release factor 2 (369 aa).

Position 249 is an N5-methylglutamine (Gln-249).

Belongs to the prokaryotic/mitochondrial release factor family. Post-translationally, methylated by PrmC. Methylation increases the termination efficiency of RF2.

Its subcellular location is the cytoplasm. Its function is as follows. Peptide chain release factor 2 directs the termination of translation in response to the peptide chain termination codons UGA and UAA. The chain is Peptide chain release factor 2 from Thermosipho melanesiensis (strain DSM 12029 / CIP 104789 / BI429).